Here is a 516-residue protein sequence, read N- to C-terminus: Probable serine/threonine-protein kinase DDB_G0293276 (516 aa).

Residues 69–115 are disordered; sequence SIEIDDENPYNTNNNNNSNNNNNNNNNNCNNSNNSNNNKNINSLDNI. Over residues 79–115 the composition is skewed to low complexity; that stretch reads NTNNNNNSNNNNNNNNNNCNNSNNSNNNKNINSLDNI. The Protein kinase domain occupies 232 to 479; it reads YKHVECIGKG…SKDIKNHPYF (248 aa). ATP contacts are provided by residues 238-246 and Lys261; that span reads IGKGGYGVV. Asp350 functions as the Proton acceptor in the catalytic mechanism.

It belongs to the protein kinase superfamily. AGC Ser/Thr protein kinase family.

The enzyme catalyses L-seryl-[protein] + ATP = O-phospho-L-seryl-[protein] + ADP + H(+). It catalyses the reaction L-threonyl-[protein] + ATP = O-phospho-L-threonyl-[protein] + ADP + H(+). The protein is Probable serine/threonine-protein kinase DDB_G0293276 of Dictyostelium discoideum (Social amoeba).